The primary structure comprises 90 residues: Small ribosomal subunit protein bS16 (90 aa).

The protein belongs to the bacterial ribosomal protein bS16 family.

This is Small ribosomal subunit protein bS16 from Lactiplantibacillus plantarum (strain ATCC BAA-793 / NCIMB 8826 / WCFS1) (Lactobacillus plantarum).